The primary structure comprises 95 residues: Small ribosomal subunit protein bS6 (95 aa).

This sequence belongs to the bacterial ribosomal protein bS6 family.

Functionally, binds together with bS18 to 16S ribosomal RNA. This chain is Small ribosomal subunit protein bS6 (rpsF), found in Halalkalibacterium halodurans (strain ATCC BAA-125 / DSM 18197 / FERM 7344 / JCM 9153 / C-125) (Bacillus halodurans).